Reading from the N-terminus, the 473-residue chain is Ribulose bisphosphate carboxylase large chain (473 aa).

Residues N116 and T166 each contribute to the substrate site. K168 functions as the Proton acceptor in the catalytic mechanism. K170 lines the substrate pocket. Residues K194, D196, and E197 each coordinate Mg(2+). The residue at position 194 (K194) is an N6-carboxylysine. H287 acts as the Proton acceptor in catalysis. Substrate-binding residues include R288, H320, and S372.

This sequence belongs to the RuBisCO large chain family. Type I subfamily. As to quaternary structure, heterohexadecamer of 8 large chains and 8 small chains. Requires Mg(2+) as cofactor.

The enzyme catalyses 2 (2R)-3-phosphoglycerate + 2 H(+) = D-ribulose 1,5-bisphosphate + CO2 + H2O. It carries out the reaction D-ribulose 1,5-bisphosphate + O2 = 2-phosphoglycolate + (2R)-3-phosphoglycerate + 2 H(+). RuBisCO catalyzes two reactions: the carboxylation of D-ribulose 1,5-bisphosphate, the primary event in carbon dioxide fixation, as well as the oxidative fragmentation of the pentose substrate. Both reactions occur simultaneously and in competition at the same active site. In Methylococcus capsulatus (strain ATCC 33009 / NCIMB 11132 / Bath), this protein is Ribulose bisphosphate carboxylase large chain.